A 714-amino-acid chain; its full sequence is T-cell activation Rho GTPase-activating protein (714 aa).

Positions 88 to 277 (QPLSIICGEN…FLIDNCFEIF (190 aa)) constitute a Rho-GAP domain. Disordered regions lie at residues 290 to 357 (DDSL…ESSV), 370 to 419 (QDRR…AEDP), 451 to 508 (QGHI…HSMS), 520 to 563 (RTSS…QSQT), and 623 to 650 (KPST…HRLS). Polar residues predominate over residues 299-311 (SDVSTLQNDSAYD). Ser398 carries the phosphoserine modification. Residues 459–471 (SRSSPGESLGSSP) are compositionally biased toward low complexity. Basic and acidic residues-rich tracts occupy residues 492–501 (KTDKTKPQRE) and 527–545 (EKSK…RKES).

In terms of tissue distribution, highly expressed in testis.

May function as a GTPase-activating protein. May play a role in transmission ratio distortion (TRD) in mouse, in which heterozygous males for t-locus transmit their t-carrying chromosome to 95% or more of their offspring. The protein is T-cell activation Rho GTPase-activating protein (Tagap) of Mus musculus (Mouse).